A 737-amino-acid chain; its full sequence is Exostosin-1c (737 aa).

Topologically, residues Met1–Lys6 are cytoplasmic. The helical; Signal-anchor for type II membrane protein transmembrane segment at Tyr7–Gln27 threads the bilayer. Over Glu28–Val737 the chain is Lumenal. N-linked (GlcNAc...) asparagine glycosylation is found at Asn194 and Asn322. UDP-N-acetyl-alpha-D-glucosamine-binding residues include Arg432, Arg540, Asp556, Glu557, Asp558, Glu644, Asp645, and Arg692. Residue Asp558 coordinates Mn(2+). A disulfide bridge connects residues Cys643 and Cys695. Asp645 is a catalytic residue.

The protein belongs to the glycosyltransferase 47 family. Requires Mn(2+) as cofactor.

The protein localises to the endoplasmic reticulum membrane. The enzyme catalyses 3-O-{[(1-&gt;4)-beta-D-GlcA-(1-&gt;4)-alpha-D-GlcNAc](n)-(1-&gt;4)-beta-D-GlcA-(1-&gt;3)-beta-D-Gal-(1-&gt;3)-beta-D-Gal-(1-&gt;4)-beta-D-Xyl}-L-seryl-[protein] + UDP-N-acetyl-alpha-D-glucosamine = 3-O-{alpha-D-GlcNAc-[(1-&gt;4)-beta-D-GlcA-(1-&gt;4)-alpha-D-GlcNAc](n)-(1-&gt;4)-beta-D-GlcA-(1-&gt;3)-beta-D-Gal-(1-&gt;3)-beta-D-Gal-(1-&gt;4)-beta-D-Xyl}-L-seryl-[protein] + UDP + H(+). It carries out the reaction 3-O-{alpha-D-GlcNAc-[(1-&gt;4)-beta-D-GlcA-(1-&gt;4)-alpha-D-GlcNAc](n)-(1-&gt;4)-beta-D-GlcA-(1-&gt;3)-beta-D-Gal-(1-&gt;3)-beta-D-Gal-(1-&gt;4)-beta-D-Xyl}-L-seryl-[protein] + UDP-alpha-D-glucuronate = 3-O-{[(1-&gt;4)-beta-D-GlcA-(1-&gt;4)-alpha-D-GlcNAc](n+1)-(1-&gt;4)-beta-D-GlcA-(1-&gt;3)-beta-D-Gal-(1-&gt;3)-beta-D-Gal-(1-&gt;4)-beta-D-Xyl}-L-seryl-[protein] + UDP + H(+). It participates in protein modification; protein glycosylation. Glycosyltransferase required for the biosynthesis of heparan-sulfate. The protein is Exostosin-1c (ext1c) of Danio rerio (Zebrafish).